Reading from the N-terminus, the 160-residue chain is Large ribosomal subunit protein uL16 (160 aa).

The disordered stretch occupies residues 138–160 (KNLENSSQENTKDSKKSQEEVKQ). Over residues 147 to 160 (NTKDSKKSQEEVKQ) the composition is skewed to basic and acidic residues.

This sequence belongs to the universal ribosomal protein uL16 family. In terms of assembly, part of the 50S ribosomal subunit.

Functionally, binds 23S rRNA and is also seen to make contacts with the A and possibly P site tRNAs. The protein is Large ribosomal subunit protein uL16 of Prochlorococcus marinus (strain AS9601).